A 431-amino-acid chain; its full sequence is D-tagatose-1,6-bisphosphate aldolase subunit KbaZ (431 aa).

It belongs to the GatZ/KbaZ family. KbaZ subfamily. In terms of assembly, forms a complex with KbaY.

It participates in carbohydrate metabolism; D-tagatose 6-phosphate degradation; D-glyceraldehyde 3-phosphate and glycerone phosphate from D-tagatose 6-phosphate: step 2/2. Its function is as follows. Component of the tagatose-1,6-bisphosphate aldolase KbaYZ that is required for full activity and stability of the Y subunit. Could have a chaperone-like function for the proper and stable folding of KbaY. When expressed alone, KbaZ does not show any aldolase activity. This chain is D-tagatose-1,6-bisphosphate aldolase subunit KbaZ, found in Salmonella arizonae (strain ATCC BAA-731 / CDC346-86 / RSK2980).